Reading from the N-terminus, the 92-residue chain is Long neurotoxin 77 (92 aa).

Residues 1-21 (MKTLLLTLVVVTIVCLDLGDS) form the signal peptide. Disulfide bonds link C24–C41, C34–C62, C47–C51, C66–C77, and C78–C83.

Belongs to the three-finger toxin family. Long-chain subfamily. Type II alpha-neurotoxin sub-subfamily. As to expression, expressed by the venom gland.

Its subcellular location is the secreted. Binds with high affinity to muscular (alpha-1/CHRNA1) and neuronal (alpha-7/CHRNA7) nicotinic acetylcholine receptor (nAChR) and inhibits acetylcholine from binding to the receptor, thereby impairing neuromuscular and neuronal transmission. This Drysdalia coronoides (White-lipped snake) protein is Long neurotoxin 77.